The sequence spans 461 residues: Probable protein phosphatase 2C 40 (461 aa).

The tract at residues 34 to 63 (REASAERASASASAGAGGRERERRPSVAAG) is disordered. Residues 57–321 (RPSVAAGQAC…DDTTCIVIDI (265 aa)) form the PPM-type phosphatase domain. Residues Asp-98, Gly-99, Asp-273, and Asp-312 each contribute to the Mn(2+) site. Residues 439–453 (KKEAMEGKRHSRDSS) are compositionally biased toward basic and acidic residues. The disordered stretch occupies residues 439 to 461 (KKEAMEGKRHSRDSSSRNSGSSE).

The protein belongs to the PP2C family. The cofactor is Mg(2+). It depends on Mn(2+) as a cofactor. Expressed in leaves, leaf sheaths, panicles, nodes and internodes. Expressed at low levels in roots and stems.

The protein localises to the nucleus. It localises to the cytoplasm. The enzyme catalyses O-phospho-L-seryl-[protein] + H2O = L-seryl-[protein] + phosphate. It carries out the reaction O-phospho-L-threonyl-[protein] + H2O = L-threonyl-[protein] + phosphate. Mediates the negative regulation of osmotic and salt stress tolerance through regulation of the jasmonate and abscisic acid signaling pathways and modulation of the raffinose family oligosaccharide metabolism pathway. In Oryza sativa subsp. japonica (Rice), this protein is Probable protein phosphatase 2C 40.